Here is a 406-residue protein sequence, read N- to C-terminus: Serine/threonine transporter SstT (406 aa).

9 helical membrane passes run 15–35, 47–67, 81–101, 140–160, 191–211, 215–235, 289–309, 315–335, and 362–382; these read LVLQ…VSPS, FVGA…AASI, IIAM…VLSF, ALMS…GLAL, FGIF…ALAG, LLVV…PAMV, IPLG…TLTL, MGIE…AVSA, and IAMQ…SAET.

It belongs to the dicarboxylate/amino acid:cation symporter (DAACS) (TC 2.A.23) family.

The protein localises to the cell inner membrane. The enzyme catalyses L-serine(in) + Na(+)(in) = L-serine(out) + Na(+)(out). It carries out the reaction L-threonine(in) + Na(+)(in) = L-threonine(out) + Na(+)(out). In terms of biological role, involved in the import of serine and threonine into the cell, with the concomitant import of sodium (symport system). This Vibrio vulnificus (strain CMCP6) protein is Serine/threonine transporter SstT.